The following is a 119-amino-acid chain: Virulence protein VsdF (119 aa).

Functionally, expressed but non-essential protein, involved in the virulence of Salmonellas. The sequence is that of Virulence protein VsdF (vsdF) from Salmonella dublin.